The chain runs to 73 residues: Putative membrane protein insertion efficiency factor (73 aa).

This sequence belongs to the UPF0161 family.

Its subcellular location is the cell inner membrane. Could be involved in insertion of integral membrane proteins into the membrane. This chain is Putative membrane protein insertion efficiency factor, found in Bacteroides fragilis (strain ATCC 25285 / DSM 2151 / CCUG 4856 / JCM 11019 / LMG 10263 / NCTC 9343 / Onslow / VPI 2553 / EN-2).